The following is a 963-amino-acid chain: TBC1 domain family member 2B (963 aa).

The tract at residues 1–30 (MPGAGARAEEGGGGGEGAAQGAAAEPGAGP) is disordered. Residues 19 to 30 (AQGAAAEPGAGP) show a composition bias toward low complexity. One can recognise a PH domain in the interval 34 to 139 (PARLCGYLQK…WLQELQQKRW (106 aa)). Serine 155 and serine 317 each carry phosphoserine. The tract at residues 272–348 (EKKKLTPEGN…EMQLQVQSQQ (77 aa)) is disordered. Positions 318-348 (GDPSSEGTSGSGSVSIRKPASEMQLQVQSQQ) are enriched in low complexity. Positions 337-535 (ASEMQLQVQS…AKYSSLEAKL (199 aa)) form a coiled coil. The residue at position 473 (serine 473) is a Phosphoserine. The region spanning 662 to 856 (GIPHEHRSKV…KIWDSFLYEG (195 aa)) is the Rab-GAP TBC domain. Phosphoserine is present on serine 957.

The protein localises to the early endosome. In terms of biological role, GTPase-activating protein that plays a role in the early steps of endocytosis. The chain is TBC1 domain family member 2B (TBC1D2B) from Homo sapiens (Human).